Here is a 283-residue protein sequence, read N- to C-terminus: 2-dehydro-3-deoxyphosphooctonate aldolase (283 aa).

It belongs to the KdsA family.

It is found in the cytoplasm. The catalysed reaction is D-arabinose 5-phosphate + phosphoenolpyruvate + H2O = 3-deoxy-alpha-D-manno-2-octulosonate-8-phosphate + phosphate. It participates in carbohydrate biosynthesis; 3-deoxy-D-manno-octulosonate biosynthesis; 3-deoxy-D-manno-octulosonate from D-ribulose 5-phosphate: step 2/3. It functions in the pathway bacterial outer membrane biogenesis; lipopolysaccharide biosynthesis. This is 2-dehydro-3-deoxyphosphooctonate aldolase from Vibrio campbellii (strain ATCC BAA-1116).